The sequence spans 589 residues: Mitogen-activated protein kinase 8 (589 aa).

Residues 18–56 (RPSSSSSSSSSNNNNNNHEQPIFNSSSFSSSSNPNHSAN) are disordered. 2 stretches are compositionally biased toward low complexity: residues 20 to 34 (SSSS…NNNN) and 41 to 56 (NSSS…HSAN). One can recognise a Protein kinase domain in the interval 104–395 (YQIQEVVGKG…AEDALADPYF (292 aa)). ATP contacts are provided by residues 110–118 (VGKGSYGVV) and lysine 133. The active-site Proton acceptor is the aspartate 230. The residue at position 266 (threonine 266) is a Phosphothreonine. The TXY motif lies at 266-268 (TDY). Tyrosine 268 is modified (phosphotyrosine). The residue at position 271 (threonine 271) is a Phosphothreonine. The disordered stretch occupies residues 474 to 589 (NQGKPGAAGG…TDKVASLHNS (116 aa)).

Belongs to the protein kinase superfamily. CMGC Ser/Thr protein kinase family. MAP kinase subfamily. In terms of assembly, interacts with CAM3, CAM4 and CAM7 in an calcium-dependent manner. Post-translationally, dually phosphorylated on Thr-266 and Tyr-268, which activates the enzyme. Autophosphorylated. In terms of tissue distribution, ubiquitous.

The catalysed reaction is L-seryl-[protein] + ATP = O-phospho-L-seryl-[protein] + ADP + H(+). It catalyses the reaction L-threonyl-[protein] + ATP = O-phospho-L-threonyl-[protein] + ADP + H(+). Activated by threonine and tyrosine phosphorylation. Activated by two independent mechanisms, the binding of CAMs in a calcium-dependent manner and the phosphorylation by MAP kinase kinase MKK3. Activated in response to mechanical wounding, hydrogen peroxide and jasmonic acid (JA). MKK3-MPK8 and CAMs-MPK8 modules negatively regulates ROS accumulation through controlling expression of the RBOHD gene during wounding. This chain is Mitogen-activated protein kinase 8 (MPK8), found in Arabidopsis thaliana (Mouse-ear cress).